Here is a 187-residue protein sequence, read N- to C-terminus: ATP synthase subunit b, chloroplastic (187 aa).

A helical membrane pass occupies residues 34 to 56 (LINLAAVIGLLFYSGRSFLTNLL).

It belongs to the ATPase B chain family. As to quaternary structure, F-type ATPases have 2 components, F(1) - the catalytic core - and F(0) - the membrane proton channel. F(1) has five subunits: alpha(3), beta(3), gamma(1), delta(1), epsilon(1). F(0) has four main subunits: a(1), b(1), b'(1) and c(10-14). The alpha and beta chains form an alternating ring which encloses part of the gamma chain. F(1) is attached to F(0) by a central stalk formed by the gamma and epsilon chains, while a peripheral stalk is formed by the delta, b and b' chains.

It is found in the plastid. The protein localises to the chloroplast thylakoid membrane. Functionally, f(1)F(0) ATP synthase produces ATP from ADP in the presence of a proton or sodium gradient. F-type ATPases consist of two structural domains, F(1) containing the extramembraneous catalytic core and F(0) containing the membrane proton channel, linked together by a central stalk and a peripheral stalk. During catalysis, ATP synthesis in the catalytic domain of F(1) is coupled via a rotary mechanism of the central stalk subunits to proton translocation. Its function is as follows. Component of the F(0) channel, it forms part of the peripheral stalk, linking F(1) to F(0). This Chlorokybus atmophyticus (Soil alga) protein is ATP synthase subunit b, chloroplastic.